We begin with the raw amino-acid sequence, 402 residues long: Dynactin subunit 2 (402 aa).

The segment at 1–26 (MADPKYADLPGIARNEPDVYETSDLP) is disordered. Coiled-coil stretches lie at residues 101 to 132 (PQQR…SAAE) and 357 to 402 (VHLD…KRLQ).

Belongs to the dynactin subunit 2 family. As to quaternary structure, subunit of dynactin, a multiprotein complex part of a tripartite complex with dynein and a adapter, such as BICDL1, BICD2 or HOOK3. The dynactin complex is built around ACTR1A/ACTB filament and consists of an actin-related filament composed of a shoulder domain, a pointed end and a barbed end. Its length is defined by its flexible shoulder domain. The soulder is composed of 2 DCTN1 subunits, 4 DCTN2 and 2 DCTN3.

The protein resides in the cytoplasm. The protein localises to the cytoskeleton. It is found in the microtubule organizing center. Its subcellular location is the centrosome. It localises to the membrane. Functionally, part of the dynactin complex that activates the molecular motor dynein for ultra-processive transport along microtubules. In the dynactin soulder domain, binds the ACTR1A filament and acts as a molecular ruler to determine the length. Modulates cytoplasmic dynein binding to an organelle, and plays a role in prometaphase chromosome alignment and spindle organization during mitosis. Involved in anchoring microtubules to centrosomes. The polypeptide is Dynactin subunit 2 (DCTN2) (Gallus gallus (Chicken)).